A 335-amino-acid chain; its full sequence is Phosphate acyltransferase (335 aa).

It belongs to the PlsX family. In terms of assembly, homodimer. Probably interacts with PlsY.

Its subcellular location is the cytoplasm. It catalyses the reaction a fatty acyl-[ACP] + phosphate = an acyl phosphate + holo-[ACP]. It participates in lipid metabolism; phospholipid metabolism. In terms of biological role, catalyzes the reversible formation of acyl-phosphate (acyl-PO(4)) from acyl-[acyl-carrier-protein] (acyl-ACP). This enzyme utilizes acyl-ACP as fatty acyl donor, but not acyl-CoA. The polypeptide is Phosphate acyltransferase (Streptococcus pyogenes serotype M18 (strain MGAS8232)).